The following is a 247-amino-acid chain: MFLEKDQDNLDNLETQAKELHKDCKECKNCQKEETKTTNKDNQKEDETVKNQSNQSNQSNQTKQTNTKQQKHQPKENSHLQITKLQTQIKELQQQLTQQKKSFDEELLKNQAELINFKKRAQTQKANELKYASSNFITNLLMPLEQLEKVIDMPTQNELLQKYLLGFKLLQQQIKKVLQDEGVEEIEALNKPFDPALHHALETVCDPKKPDKTNLAVLQKGYLYKKRILRPTLVKVNEWSDKNDKNE.

Basic and acidic residues predominate over residues 31 to 49 (QKEETKTTNKDNQKEDETV). Positions 31 to 79 (QKEETKTTNKDNQKEDETVKNQSNQSNQSNQTKQTNTKQQKHQPKENSH) are disordered. Low complexity predominate over residues 50-68 (KNQSNQSNQSNQTKQTNTK).

It belongs to the GrpE family. Homodimer.

The protein resides in the cytoplasm. Functionally, participates actively in the response to hyperosmotic and heat shock by preventing the aggregation of stress-denatured proteins, in association with DnaK and GrpE. It is the nucleotide exchange factor for DnaK and may function as a thermosensor. Unfolded proteins bind initially to DnaJ; upon interaction with the DnaJ-bound protein, DnaK hydrolyzes its bound ATP, resulting in the formation of a stable complex. GrpE releases ADP from DnaK; ATP binding to DnaK triggers the release of the substrate protein, thus completing the reaction cycle. Several rounds of ATP-dependent interactions between DnaJ, DnaK and GrpE are required for fully efficient folding. This Onion yellows phytoplasma (strain OY-M) protein is Protein GrpE.